The chain runs to 304 residues: Dipeptide transport system permease protein DppC (304 aa).

Positions 1–24 (MKTEHAKPLMTPEPNSPPPEDQYT) are disordered. A run of 6 helical transmembrane segments spans residues 41 to 61 (LAIV…FAPL), 108 to 128 (VGFF…LIAG), 141 to 161 (IFDI…VAIL), 164 to 184 (SLQN…GRLV), 227 to 247 (ATLG…LGLG), and 271 to 291 (WTVL…NMIG). Residues 102–291 (ARLSLQVGFF…LVVLGFNMIG (190 aa)) form the ABC transmembrane type-1 domain.

The protein belongs to the binding-protein-dependent transport system permease family. OppBC subfamily.

It localises to the cell membrane. Probably part of the ABC transporter Dpp involved in dipeptide transport. Responsible for the translocation of the substrate across the membrane. This Alkalihalophilus pseudofirmus (strain ATCC BAA-2126 / JCM 17055 / OF4) (Bacillus pseudofirmus) protein is Dipeptide transport system permease protein DppC (dppC).